A 236-amino-acid chain; its full sequence is Large ribosomal subunit protein uL1 (236 aa).

It belongs to the universal ribosomal protein uL1 family. Part of the 50S ribosomal subunit.

Functionally, binds directly to 23S rRNA. The L1 stalk is quite mobile in the ribosome, and is involved in E site tRNA release. In terms of biological role, protein L1 is also a translational repressor protein, it controls the translation of the L11 operon by binding to its mRNA. The protein is Large ribosomal subunit protein uL1 of Heliobacterium modesticaldum (strain ATCC 51547 / Ice1).